Consider the following 257-residue polypeptide: MAVLKPVRLGVNVDHVATVRNARGGALPDPVRAAALAKAAGAHGITAHLREDRRHIRDADMERLKAEIDLPLNFEMAATDEMVAIACRVRPNACCLVPERREERTTEGGLDAAGQRAELAPRIARLKAAGIRVSLFIAADPAQIAAAAELGADIVELHTGAWCDAVTEGRHVEAEAEFVRLKAGARQAAGLGLEVHAGHGLDYATAERIAAFPQIVELNIGHFLIGEAIFVGLDQAIARMRAAIAAGRAAVGDGAAA.

Asparagine 12 is a binding site for 3-amino-2-oxopropyl phosphate. 14–15 (DH) is a binding site for 1-deoxy-D-xylulose 5-phosphate. A 3-amino-2-oxopropyl phosphate-binding site is contributed by arginine 23. The active-site Proton acceptor is histidine 48. 1-deoxy-D-xylulose 5-phosphate is bound by residues arginine 50 and histidine 55. The Proton acceptor role is filled by glutamate 75. Residue threonine 105 coordinates 1-deoxy-D-xylulose 5-phosphate. Histidine 199 (proton donor) is an active-site residue. 3-amino-2-oxopropyl phosphate contacts are provided by residues glycine 200 and 221–222 (GH).

It belongs to the PNP synthase family. Homooctamer; tetramer of dimers.

It localises to the cytoplasm. It carries out the reaction 3-amino-2-oxopropyl phosphate + 1-deoxy-D-xylulose 5-phosphate = pyridoxine 5'-phosphate + phosphate + 2 H2O + H(+). Its pathway is cofactor biosynthesis; pyridoxine 5'-phosphate biosynthesis; pyridoxine 5'-phosphate from D-erythrose 4-phosphate: step 5/5. Catalyzes the complicated ring closure reaction between the two acyclic compounds 1-deoxy-D-xylulose-5-phosphate (DXP) and 3-amino-2-oxopropyl phosphate (1-amino-acetone-3-phosphate or AAP) to form pyridoxine 5'-phosphate (PNP) and inorganic phosphate. This is Pyridoxine 5'-phosphate synthase from Xanthobacter autotrophicus (strain ATCC BAA-1158 / Py2).